A 22-amino-acid chain; its full sequence is Mu-conotoxin CnIIIA (22 aa).

Intrachain disulfides connect C3–C15, C4–C21, and C10–C22. The residue at position 22 (C22) is a Cysteine amide.

This sequence belongs to the conotoxin M superfamily. Expressed by the venom duct. Has not been isolated from the crude venom.

The protein resides in the secreted. Mu-conotoxins block voltage-gated sodium channels (Nav). This synthetic toxin moderately blocks rNav1.1/SCN1A, rNav1.2/SCN2A, rNav1.3/SCN3A, rNav1.4/SCN4A, rNav1.5/SCN5A, and mNav1.6/SCN8A. This block is very slowly reversible. Causes seizures when injected intracranially into mice. This is Mu-conotoxin CnIIIA from Conus consors (Singed cone).